The primary structure comprises 752 residues: Iron-sulfur clusters transporter ABCB7, mitochondrial (752 aa).

The transit peptide at 1 to 22 (MALLAIHSWRWAAAAVAFEKHK) directs the protein to the mitochondrion. Topologically, residues 23 to 140 (HSAVLTRSLV…KDRPDLRARV (118 aa)) are mitochondrial matrix. The ABC transmembrane type-1 domain occupies 140 to 436 (VAISLGFLGG…LGTVYRETRQ (297 aa)). The helical transmembrane segment at 141–161 (AISLGFLGGAKAMNIVVPFMF) threads the bilayer. At 162–185 (KYAVDSLNQMSGNMLNLSDAPNTV) the chain is on the mitochondrial intermembrane side. Residues 186–206 (ATMATAVLIGYGVSRAGAAFF) form a helical membrane-spanning segment. Topologically, residues 207–259 (NEVRNAVFGKVAQNSIRRIAKNVFLHLHNLDLGFHLSRQTGALSKAIDRGTRG) are mitochondrial matrix. Residues Lys-216 and Lys-251 each carry the N6-acetyllysine modification. Residues 260–280 (ISFVLSALVFNLLPIVFEMTL) traverse the membrane as a helical segment. At 281-290 (VSSVLYYKCG) the chain is on the mitochondrial intermembrane side. The chain crosses the membrane as a helical span at residues 291-311 (AQFALVTLGTLGAYTAFTVAV). The Mitochondrial matrix segment spans residues 312 to 382 (TRWRTRFRIE…TLAMLNFGQS (71 aa)). Position 315 to 319 (315 to 319 (RTRFR)) interacts with glutathione. The residue at position 336 (Ser-336) is a Phosphoserine. Tyr-340 is subject to Phosphotyrosine. Thr-342 carries the post-translational modification Phosphothreonine. Lys-350 is modified (N6-acetyllysine). Residue 378–381 (NFGQ) coordinates glutathione. A helical transmembrane segment spans residues 383–403 (AIFSVGLTAIMVLASQGIVAG). Residues 404–409 (ALTVGD) are Mitochondrial intermembrane-facing. The helical transmembrane segment at 410-430 (LVMVNGLLFQLSLPLNFLGTV) threads the bilayer. Gly-428 lines the glutathione pocket. Residues 431–752 (YRETRQALID…SVKGCGNCSC (322 aa)) are Mitochondrial matrix-facing. Residues 472–706 (VAFDNVHFEY…SSSIYSEMWH (235 aa)) form the ABC transporter domain. ATP contacts are provided by residues Tyr-481 and 505–516 (GGSGSGKSTIVR).

The protein belongs to the ABC transporter superfamily. ABCB family. Heavy Metal importer (TC 3.A.1.210) subfamily. Homodimer or heterodimer. Interacts with C10orf88/PAAT. Forms a complex with ABCB10 and FECH, where a dimeric FECH bridges ABCB7 and ABCB10 homodimers; this complex may be required for cellular iron homeostasis, mitochondrial function and heme biosynthesis. Interacts with FECH. Interacts with ATP5F1A. Interacts with COX4I1; this interaction allows the regulation of cellular iron homeostasis and cellular reactive oxygen species (ROS) levels in cardiomyocytes.

The protein localises to the mitochondrion inner membrane. The enzyme catalyses (glutathione)4[2Fe(III)-2S] cluster(in) + ATP + H2O = (glutathione)4[2Fe(III)-2S] cluster(out) + ADP + phosphate + H(+). Exports glutathione-coordinated iron-sulfur clusters such as [2Fe-2S]-(GS)4 cluster from the mitochondria to the cytosol in an ATP-dependent manner allowing the assembly of the cytosolic iron-sulfur (Fe/S) cluster-containing proteins and participates in iron homeostasis. Moreover, through a functional complex formed of ABCB7, FECH and ABCB10, also plays a role in the cellular iron homeostasis, mitochondrial function and heme biosynthesis. In cardiomyocytes, regulates cellular iron homeostasis and cellular reactive oxygen species (ROS) levels through its interaction with COX4I1. May also play a role in hematopoiesis. The polypeptide is Iron-sulfur clusters transporter ABCB7, mitochondrial (Rattus norvegicus (Rat)).